Consider the following 375-residue polypeptide: Queuine tRNA-ribosyltransferase (375 aa).

The active-site Proton acceptor is the D90. Substrate-binding positions include 90 to 94 (DSGGF), D144, Q190, and G217. Residues 248–254 (GIGTPHY) form an RNA binding region. The active-site Nucleophile is D267. Residues 272-276 (TRIAR) form an RNA binding; important for wobble base 34 recognition region. Zn(2+) is bound by residues C305, C307, C310, and H336.

The protein belongs to the queuine tRNA-ribosyltransferase family. As to quaternary structure, homodimer. Within each dimer, one monomer is responsible for RNA recognition and catalysis, while the other monomer binds to the replacement base PreQ1. It depends on Zn(2+) as a cofactor.

The catalysed reaction is 7-aminomethyl-7-carbaguanine + guanosine(34) in tRNA = 7-aminomethyl-7-carbaguanosine(34) in tRNA + guanine. The protein operates within tRNA modification; tRNA-queuosine biosynthesis. In terms of biological role, catalyzes the base-exchange of a guanine (G) residue with the queuine precursor 7-aminomethyl-7-deazaguanine (PreQ1) at position 34 (anticodon wobble position) in tRNAs with GU(N) anticodons (tRNA-Asp, -Asn, -His and -Tyr). Catalysis occurs through a double-displacement mechanism. The nucleophile active site attacks the C1' of nucleotide 34 to detach the guanine base from the RNA, forming a covalent enzyme-RNA intermediate. The proton acceptor active site deprotonates the incoming PreQ1, allowing a nucleophilic attack on the C1' of the ribose to form the product. After dissociation, two additional enzymatic reactions on the tRNA convert PreQ1 to queuine (Q), resulting in the hypermodified nucleoside queuosine (7-(((4,5-cis-dihydroxy-2-cyclopenten-1-yl)amino)methyl)-7-deazaguanosine). This chain is Queuine tRNA-ribosyltransferase, found in Borrelia duttonii (strain Ly).